A 213-amino-acid chain; its full sequence is Kynurenine formamidase (213 aa).

A substrate-binding site is contributed by Trp-20. 3 residues coordinate Zn(2+): His-50, His-54, and Asp-56. His-60 acts as the Proton donor/acceptor in catalysis. Zn(2+) is bound by residues His-161 and Glu-173.

It belongs to the Cyclase 1 superfamily. KynB family. In terms of assembly, homodimer. It depends on Zn(2+) as a cofactor.

It catalyses the reaction N-formyl-L-kynurenine + H2O = L-kynurenine + formate + H(+). It functions in the pathway amino-acid degradation; L-tryptophan degradation via kynurenine pathway; L-kynurenine from L-tryptophan: step 2/2. Catalyzes the hydrolysis of N-formyl-L-kynurenine to L-kynurenine, the second step in the kynurenine pathway of tryptophan degradation. This chain is Kynurenine formamidase, found in Pseudomonas aeruginosa (strain UCBPP-PA14).